The sequence spans 1346 residues: Pikromycin polyketide synthase component PikAIV (1346 aa).

The stretch at 3-32 (SSNEQLVDALRASLKENEELRKESRRRADR) forms a coiled coil. The region spanning 34-461 (QEPMAIVGMS…GTNAHVVLEE (428 aa)) is the Ketosynthase family 3 (KS3) domain. Residues 37 to 1332 (MAIVGMSCRF…HAPAVAEAVL (1296 aa)) form a module 6 region. Catalysis depends on for beta-ketoacyl synthase activity residues Cys207, His342, and His382. Residues 562–844 (FVFPGQGTQW…VLTMTLPDKV (283 aa)) form an acyltransferase region. The active-site Acyl-ester intermediate; for acyltransferase activity is Ser652. Positions 945 to 1020 (SAVLAMVMRQ…ALAERISDEL (76 aa)) constitute a Carrier domain. Ser980 is subject to O-(pantetheine 4'-phosphoryl)serine. Residues 1028-1050 (AEPSDHEQAEEEKAAAPAGARSG) form a disordered region. Residues 1030–1041 (PSDHEQAEEEKA) show a composition bias toward basic and acidic residues. Position 1125 (Thr1125) interacts with substrate. The tract at residues 1127–1332 (ANGGPHEFLR…HAPAVAEAVL (206 aa)) is thioesterase. The active-site Nucleophile; for thioesterase activity is Ser1196. Gly1197 and Asp1224 together coordinate substrate. Catalysis depends on His1316, which acts as the Proton acceptor; for thioesterase activity.

In terms of assembly, homodimer. Pikromycin PKS consists of a combination of multimodular (PikAI and PikAII) and monomodular (PikAIII and PikAIV) polypeptides each coding for a functional synthase subunit which participates in 1 (monomodular) or 2 (multimodular) of the six FAS-like elongation steps required for formation of the polyketide. Module 1, 2, 3, 4, 5, and 6 participating in biosynthesis steps 1, 2, 3, 4, 5, and 6, respectively. The cofactor is pantetheine 4'-phosphate.

It carries out the reaction 5 (S)-methylmalonyl-CoA + malonyl-CoA + 5 NADPH + 11 H(+) = 10-deoxymethynolide + 6 CO2 + 5 NADP(+) + 6 CoA + 2 H2O. The catalysed reaction is 6 (S)-methylmalonyl-CoA + malonyl-CoA + 5 NADPH + 12 H(+) = narbonolide + 7 CO2 + 5 NADP(+) + 7 CoA + 2 H2O. The protein operates within antibiotic biosynthesis. Irreversibly inhibited by (2S,3R,4S)-2,4-dihydroxy-3-methylhexyl-phosphonic acid and (3R,4S)-4-hydroxy-3-methyl-2-oxohexyl-phosphonic acid. Involved in the biosynthesis of 12- and 14-membered ring macrolactone antibiotics such as methymycin and neomethymycin, and pikromycin and narbomycin, respectively. Component of the pikromycin PKS which catalyzes the biosynthesis of both precursors 10-deoxymethynolide (12-membered ring macrolactone) and narbonolide (14-membered ring macrolactone). Chain elongation through PikAI, PikAII and PikAIII followed by thioesterase catalyzed termination results in the production of 10-deoxymethynolide, while continued elongation through PikAIV, followed by thioesterase (TE) catalyzed cyclization results in the biosynthesis of the narbonolide. The thioesterase can use a series of diketide-N-acetylcysteamine (SNAC) thioesters, but has a strong preference for the 2-methyl-3-ketopentanoyl-SNAC over the stereoisomers of 2-methyl-3-hydroxyacyl-SNAC. This Streptomyces venezuelae protein is Pikromycin polyketide synthase component PikAIV.